The chain runs to 390 residues: Queuine tRNA-ribosyltransferase (390 aa).

D90 functions as the Proton acceptor in the catalytic mechanism. Substrate contacts are provided by residues 90-94, D144, Q197, and G224; that span reads DSGGF. The segment at 255-261 is RNA binding; it reads GVGTPED. D274 serves as the catalytic Nucleophile. The tract at residues 279 to 283 is RNA binding; important for wobble base 34 recognition; that stretch reads TRNAR. Zn(2+)-binding residues include C312, C314, C317, and H354.

Belongs to the queuine tRNA-ribosyltransferase family. Homodimer. Within each dimer, one monomer is responsible for RNA recognition and catalysis, while the other monomer binds to the replacement base PreQ1. Zn(2+) is required as a cofactor.

It catalyses the reaction 7-aminomethyl-7-carbaguanine + guanosine(34) in tRNA = 7-aminomethyl-7-carbaguanosine(34) in tRNA + guanine. It participates in tRNA modification; tRNA-queuosine biosynthesis. Its function is as follows. Catalyzes the base-exchange of a guanine (G) residue with the queuine precursor 7-aminomethyl-7-deazaguanine (PreQ1) at position 34 (anticodon wobble position) in tRNAs with GU(N) anticodons (tRNA-Asp, -Asn, -His and -Tyr). Catalysis occurs through a double-displacement mechanism. The nucleophile active site attacks the C1' of nucleotide 34 to detach the guanine base from the RNA, forming a covalent enzyme-RNA intermediate. The proton acceptor active site deprotonates the incoming PreQ1, allowing a nucleophilic attack on the C1' of the ribose to form the product. After dissociation, two additional enzymatic reactions on the tRNA convert PreQ1 to queuine (Q), resulting in the hypermodified nucleoside queuosine (7-(((4,5-cis-dihydroxy-2-cyclopenten-1-yl)amino)methyl)-7-deazaguanosine). This chain is Queuine tRNA-ribosyltransferase, found in Leptothrix cholodnii (strain ATCC 51168 / LMG 8142 / SP-6) (Leptothrix discophora (strain SP-6)).